Consider the following 1403-residue polypeptide: Baculoviral IAP repeat-containing protein 1e (1403 aa).

BIR repeat units lie at residues 60–127, 159–227, and 278–345; these read EAKR…CEFL, EEAR…CEFL, and EELR…CVFL. The Zn(2+) site is built by Cys315, Cys318, His335, and Cys342. The region spanning 464-759 is the NACHT domain; that stretch reads SVMCVEGETG…EFLAAVRLTE (296 aa). An ATP-binding site is contributed by 473 to 478; it reads GSGKTT.

In terms of assembly, component of the NLRC4 inflammasome, at least composed of NLRC4, caspase-1 (CASP1) and some NAIP protein. Flagellin binding by NAIP5 triggers assembly of the inflammasome, a huge complex that contains a single NAIP5 chain and multiple copies of NLRC4. As to quaternary structure, (Microbial infection) Interacts with S.typhimurium (Salmonella) flagellin. (Microbial infection) Interacts with L.pneumophila flagellin. Detected in macrophages (at protein level).

In terms of biological role, sensor component of the NLRC4 inflammasome that specifically recognizes and binds flagellin from pathogenic bacteria such as Legionella or Salmonella. Association of pathogenic bacteria proteins drives in turn drive assembly and activation of the NLRC4 inflammasome, promoting caspase-1 activation, cytokine production and macrophage pyroptosis. The NLRC4 inflammasome is activated as part of the innate immune response to a range of intracellular bacteria. The NLRC4 inflammasome senses Gram-negative bacteria such as L.pneumophila and P.aeruginosa, enteric pathogens S.typhimurium (Salmonella) and S.flexneri. May contribute to prevent motor-neuron apoptosis induced by a variety of signals. This chain is Baculoviral IAP repeat-containing protein 1e, found in Mus musculus (Mouse).